A 510-amino-acid chain; its full sequence is MTTPVVALVGRPNVGKSTLFNRLTRTRDALVADFPGLTRDRKYGQANIAGYDFIVIDTGGIDGTEEGVEEKMAEQSLLAIEEADVVLFLVDARAGLTSADIGIANYLRQRQNKITVVVANKTDGIDADSHCAEFYQLGLGEVEQIAASQGRGVSALMEQVLAPIAEKMNAESPEQSAVENTDVSETGEQDEWDHDFDFANEEDTALLDDAIAEELEAQDKNIKIAIVGRPNVGKSTLTNRILGEDRVVVYDLPGTTRDSIYIPMERDGQHYTIIDTAGVRKRGKVHLAVEKFSVIKTLQAIQDANVVLLTIDAREGVSDQDLSLLGFILNAGRSLVIVVNKWDGLNQDIKDQVKSELDRRLDFIDFARVHFISALHGSGVGNLFDSIQEAYACATQKMTTSMLTRILQMATDEHQPPMMGGRRIKLKYAHPGGYNPPIIVVHGNQMDKLPDSYKRYLSNYYRRSLKIIGSPIRLLFQEGNNPFAGKRNKLTPNQLRKRKRLMKFIKKSKR.

2 consecutive EngA-type G domains span residues 4-168 (PVVA…AEKM) and 222-395 (IKIA…ACAT). GTP contacts are provided by residues 10–17 (GRPNVGKS), 57–61 (DTGGI), 120–123 (NKTD), 228–235 (GRPNVGKS), 275–279 (DTAGV), and 340–343 (NKWD). A KH-like domain is found at 396 to 480 (QKMTTSMLTR…PIRLLFQEGN (85 aa)).

The protein belongs to the TRAFAC class TrmE-Era-EngA-EngB-Septin-like GTPase superfamily. EngA (Der) GTPase family. In terms of assembly, associates with the 50S ribosomal subunit.

In terms of biological role, GTPase that plays an essential role in the late steps of ribosome biogenesis. This is GTPase Der from Pasteurella multocida (strain Pm70).